The sequence spans 646 residues: MAKIIGIDLGTTNSCVAVLEGDKVKVIENAEGARTTPSIIAYKDGEILVGQSAKRQAVTNPKNTLFAIKRLIGRRYEDQAVQKDIGLVPYKIIKADNGDAWVEVNDKKLAPQQISAEILKKMKKTAEDYLGETVTEAVITVPAYFNDAQRQATKDAGKIAGLDVKRIINEPTAAALAFGMDKKEGDRKVAVYDLGGGTFDVSIIEIADLDGDQQIEVLSTNGDTFLGGEDFDNALIEYLVEEFKKEQNVNLKNDPLALQRLKEAAEKAKIELSSSNATEINLPYITADATGPKHLVINVTRAKLEGLVADLVARTIEPCKIALKDAGLSTSDISDVILVGGQSRMPLVQQKVQEFFGREPRKDVNPDEAVAIGAAIQGAVLSGDKNDVLLLDVTPLTLGIETMGGVLTPIIEKNTTIPAKKSQVFSTAADNQPAVDISVYQGERKMAQQNKLLGNFQLGDIPPAPRGVPQIEVSFDINADGILKVSAKDKSTGKEQSIQIKANSGLSDAEIEAMIKDAEANAEEDRKFEELAKARNEADALISSSNKAVKDLGDKVTEDEKTAVNTAVSELEAATKENDVEVIKAKTEALQNILMPITQRAYEQAQQAGGAEGFDPNAFQGGDAGQQKADDGVVDAEFTEVKDDKK.

The residue at position 198 (Thr-198) is a Phosphothreonine; by autocatalysis. Residues 603 to 646 are disordered; sequence EQAQQAGGAEGFDPNAFQGGDAGQQKADDGVVDAEFTEVKDDKK. Low complexity predominate over residues 618–627; sequence AFQGGDAGQQ.

Belongs to the heat shock protein 70 family.

In terms of biological role, acts as a chaperone. The sequence is that of Chaperone protein DnaK from Acinetobacter baumannii (strain AB307-0294).